Here is a 504-residue protein sequence, read N- to C-terminus: Glycerol kinase (504 aa).

Threonine 14 lines the ADP pocket. Threonine 14, threonine 15, and serine 16 together coordinate ATP. Threonine 14 contacts sn-glycerol 3-phosphate. Position 18 (arginine 18) interacts with ADP. Arginine 84, glutamate 85, tyrosine 136, and aspartate 246 together coordinate sn-glycerol 3-phosphate. 5 residues coordinate glycerol: arginine 84, glutamate 85, tyrosine 136, aspartate 246, and glutamine 247. Threonine 268 and glycine 311 together coordinate ADP. Residues threonine 268, glycine 311, glutamine 315, and glycine 412 each coordinate ATP. The ADP site is built by glycine 412 and asparagine 416.

Belongs to the FGGY kinase family.

The enzyme catalyses glycerol + ATP = sn-glycerol 3-phosphate + ADP + H(+). The protein operates within polyol metabolism; glycerol degradation via glycerol kinase pathway; sn-glycerol 3-phosphate from glycerol: step 1/1. With respect to regulation, inhibited by fructose 1,6-bisphosphate (FBP). Its function is as follows. Key enzyme in the regulation of glycerol uptake and metabolism. Catalyzes the phosphorylation of glycerol to yield sn-glycerol 3-phosphate. In Aliivibrio salmonicida (strain LFI1238) (Vibrio salmonicida (strain LFI1238)), this protein is Glycerol kinase.